A 1093-amino-acid polypeptide reads, in one-letter code: Semaphorin-5B (1093 aa).

The N-terminal stretch at 1-19 is a signal peptide; it reads MVVPGPLALSLLLSSLTLL. The Extracellular segment spans residues 20 to 978; sequence VSHLSSSQDI…TSCGGFNLIH (959 aa). The Sema domain occupies 45-495; it reads HPIVAFEDLK…LSDRVLRVPL (451 aa). N-linked (GlcNAc...) asparagine glycosylation is found at Asn59 and Asn95. 2 cysteine pairs are disulfide-bonded: Cys114–Cys124 and Cys141–Cys150. Residues Asn157, Asn178, and Asn287 are each glycosylated (N-linked (GlcNAc...) asparagine). 2 disulfide bridges follow: Cys264-Cys367 and Cys288-Cys330. Residues Asn333, Asn378, Asn532, Asn539, Asn547, and Asn602 are each glycosylated (N-linked (GlcNAc...) asparagine). TSP type-1 domains follow at residues 551 to 605, 606 to 662, 664 to 713, 721 to 776, 795 to 850, 852 to 907, and 908 to 952; these read DGGF…NCSR, NGAW…TPCP, PIFW…EACP, WTPW…ACDT, NGGW…QACP, RGAW…QACP, and EGWS…RPCP. Intrachain disulfides connect Cys618–Cys655, Cys622–Cys661, Cys633–Cys645, Cys676–Cys707, Cys680–Cys712, and Cys691–Cys697. N-linked (GlcNAc...) asparagine glycosylation is present at Asn728. Cystine bridges form between Cys807-Cys844, Cys811-Cys849, Cys822-Cys834, Cys864-Cys901, Cys868-Cys906, and Cys879-Cys891. A glycan (N-linked (GlcNAc...) asparagine) is linked at Asn944. A helical transmembrane segment spans residues 979–999; it reads LIVTGVSCFLVSGLLTLAVYL. Over 1000–1093 the chain is Cytoplasmic; the sequence is SCQHCQRQSQ…SPGQRCFPNS (94 aa).

This sequence belongs to the semaphorin family. In adult, only detected in brain.

It is found in the membrane. Its function is as follows. May act as a positive axonal guidance cue. In Mus musculus (Mouse), this protein is Semaphorin-5B (Sema5b).